Consider the following 24-residue polypeptide: MTWTTPAYTELRLGFEITMYIANR.

A cross-link (pyrroloquinoline quinone (Glu-Tyr)) is located at residues 16–20; sequence EITMY.

It belongs to the PqqA family.

The protein operates within cofactor biosynthesis; pyrroloquinoline quinone biosynthesis. Its function is as follows. Required for coenzyme pyrroloquinoline quinone (PQQ) biosynthesis. PQQ is probably formed by cross-linking a specific glutamate to a specific tyrosine residue and excising these residues from the peptide. The polypeptide is Coenzyme PQQ synthesis protein A (Cupriavidus taiwanensis (strain DSM 17343 / BCRC 17206 / CCUG 44338 / CIP 107171 / LMG 19424 / R1) (Ralstonia taiwanensis (strain LMG 19424))).